The following is a 480-amino-acid chain: MAKVYKDLREFLEVLEQEGQLIRVKEEVNPEPDIAAAGRAAANLGKNQPAVFFEKIKGYKYSVVTNVHGSWQNHALMLGLDKNTSTKDQFYELNRRWDKFPVPPNVVKREAAPCKENVIDKDINLFEILPLYRINEQDGGFYISKASVVTADPEYPDDFNKLNVGTYRIQVKDRDRVGIQALAMHDIAVQLEKAEAENKPLPIAITIGNNPLVTFMASTPVGYNQNEYEFVGALQDGVPMDIVKSDLYDHLYVPAGSEVVLEGHIIPRVRTVEGPFGEFPGSYSGARLQCEVKIDRITHRTNPIFENLYLGIPWTEIDYLMALNTSVPLYKQLKETMPEVVAVNAMYTHGIGVIISTKVRYGGYAKGVAFRLLSTPHGMPYSKIVIVVDEFVDPFNLEQVMWALTTRVHPGKDVSIIENCPGMPLDPSTNPPGMHTKMIIDATTPVPPEPNPRETQLLDPPDGTEEWEEKLKELLKNQNR.

3 residues coordinate Mn(2+): Asn163, His185, and Glu227. Residues 163–168 (NVGTYR) and 184–185 (MH) contribute to the prenylated FMN site. Catalysis depends on Glu278, which acts as the Proton donor. Residues 443 to 466 (TTPVPPEPNPRETQLLDPPDGTEE) form a disordered region.

Belongs to the UbiD family. YclC subfamily. As to quaternary structure, homohexamer. Prenylated FMN serves as cofactor. It depends on Mn(2+) as a cofactor.

The catalysed reaction is 4-hydroxybenzoate + H(+) = phenol + CO2. The enzyme catalyses 3,4-dihydroxybenzoate + H(+) = catechol + CO2. Its activity is regulated as follows. Inhibited by Zn(2+), (2,3,4)-trihydroxybenzoate and (3,4,5)-trihydroxybenzoate. Ammonium and rubidium ions decrease the activity of the carboxylation of 3,4-dihydroxybenzoate by about 20%. Functionally, involved in the non-oxidative decarboxylation and detoxification of phenolic derivatives under anaerobic conditions. Oxygen-sensitive phenolic acid decarboxylase that catalyzes the reversible decarboxylation of 4-hydroxybenzoate and 3,4-dihydroxybenzoate. This chain is Phenolic acid decarboxylase, found in Sedimentibacter hydroxybenzoicus (Clostridium hydroxybenzoicum).